Reading from the N-terminus, the 548-residue chain is Membrane protein insertase YidC (548 aa).

A helical transmembrane segment spans residues 6–26 (NLLVIALLFVSFMIWQAWEQD). Positions 28-55 (NPQPQAQQTTQTTTTAAGSAADQGVPAS) are disordered. The segment covering 30-50 (QPQAQQTTQTTTTAAGSAADQ) has biased composition (low complexity). The next 4 helical transmembrane spans lie at 350–370 (FVGNWGFSIIIITFIVRGIMY), 420–440 (LGGCFPLLIQMPIFLALYYML), 458–478 (LSAQDPYYILPILMGVTMFFI), and 499–519 (PVIFTVFFLWFPSGLVLYYIV).

It belongs to the OXA1/ALB3/YidC family. Type 1 subfamily. As to quaternary structure, interacts with the Sec translocase complex via SecD. Specifically interacts with transmembrane segments of nascent integral membrane proteins during membrane integration.

It is found in the cell inner membrane. Its function is as follows. Required for the insertion and/or proper folding and/or complex formation of integral membrane proteins into the membrane. Involved in integration of membrane proteins that insert both dependently and independently of the Sec translocase complex, as well as at least some lipoproteins. Aids folding of multispanning membrane proteins. In Escherichia coli O127:H6 (strain E2348/69 / EPEC), this protein is Membrane protein insertase YidC.